We begin with the raw amino-acid sequence, 301 residues long: Ubiquitin thioesterase OTU1 (301 aa).

A UBX-like region spans residues 5-83 (RCKAKNGTHL…IVEEEKNKPK (79 aa)). The region spanning 102 to 227 (VERRVVPADN…GIHYDPLQKV (126 aa)) is the OTU domain. Residues 107–113 (VPADNSC) form a cys-loop region. Residue D110 is part of the active site. The active-site Nucleophile is C113. A variable-loop region spans residues 166–176 (IRRDDTWGGAI). The his-loop stretch occupies residues 216–220 (YDGIH). Substrate is bound at residue I219. Residue H220 is part of the active site. The interval 244 to 249 (DVILAQ) is S2 site. The C2H2-type zinc finger occupies 271–295 (LRCMVCQTGLVGQKEAREHAKETGH). Residue H295 is part of the active site.

The protein localises to the cytoplasm. The catalysed reaction is Thiol-dependent hydrolysis of ester, thioester, amide, peptide and isopeptide bonds formed by the C-terminal Gly of ubiquitin (a 76-residue protein attached to proteins as an intracellular targeting signal).. Its function is as follows. Hydrolase that can remove conjugated ubiquitin from proteins and participates in endoplasmic reticulum-associated degradation (ERAD) for misfolded lumenal proteins. May act by triming the ubiquitin chain on the associated substrate to facilitate their threading through the VCP/p97 pore. Ubiquitin moieties on substrates may present a steric impediment to the threading process when the substrate is transferred to the VCP pore and threaded through VCP's axial channel. Mediates deubiquitination of 'Lys-27'-, 'Lys-29'- and 'Lys-33'-linked polyubiquitin chains. Also able to hydrolyze 'Lys-11'-linked ubiquitin chains. Cleaves both polyubiquitin and di-ubiquitin. In Danio rerio (Zebrafish), this protein is Ubiquitin thioesterase OTU1 (yod1).